Consider the following 457-residue polypeptide: ATP synthase subunit beta (457 aa).

Glycine 147–threonine 154 is a binding site for ATP.

It belongs to the ATPase alpha/beta chains family. In terms of assembly, F-type ATPases have 2 components, CF(1) - the catalytic core - and CF(0) - the membrane proton channel. CF(1) has five subunits: alpha(3), beta(3), gamma(1), delta(1), epsilon(1). CF(0) has three main subunits: a(1), b(2) and c(9-12). The alpha and beta chains form an alternating ring which encloses part of the gamma chain. CF(1) is attached to CF(0) by a central stalk formed by the gamma and epsilon chains, while a peripheral stalk is formed by the delta and b chains.

Its subcellular location is the cell inner membrane. The catalysed reaction is ATP + H2O + 4 H(+)(in) = ADP + phosphate + 5 H(+)(out). Its function is as follows. Produces ATP from ADP in the presence of a proton gradient across the membrane. The catalytic sites are hosted primarily by the beta subunits. The polypeptide is ATP synthase subunit beta (Pasteurella multocida (strain Pm70)).